The sequence spans 439 residues: Serine/threonine-protein kinase 2 (439 aa).

In terms of domain architecture, Protein kinase spans asparagine 87 to asparagine 439. ATP contacts are provided by residues isoleucine 93–valine 101 and lysine 117. The Proton acceptor role is filled by aspartate 307.

It belongs to the protein kinase superfamily. Ser/Thr protein kinase family. Poxviruses subfamily. Phosphorylated in vivo. Autophosphorylated in vitro.

It is found in the host endoplasmic reticulum. It localises to the host endoplasmic reticulum-Golgi intermediate compartment. It catalyses the reaction L-seryl-[protein] + ATP = O-phospho-L-seryl-[protein] + ADP + H(+). It carries out the reaction L-threonyl-[protein] + ATP = O-phospho-L-threonyl-[protein] + ADP + H(+). Its function is as follows. Essential serine-protein kinase involved in the early stage of virion morphogenesis. This chain is Serine/threonine-protein kinase 2 (OPG054), found in Vaccinia virus (strain Copenhagen) (VACV).